The sequence spans 264 residues: Type III pantothenate kinase (264 aa).

Position 6 to 13 (6 to 13 (DVGNTNIK)) interacts with ATP. 108–111 (GSDR) provides a ligand contact to substrate. Asp-110 (proton acceptor) is an active-site residue. Thr-134 provides a ligand contact to ATP.

Belongs to the type III pantothenate kinase family. In terms of assembly, homodimer. NH4(+) serves as cofactor. K(+) is required as a cofactor.

The protein localises to the cytoplasm. It carries out the reaction (R)-pantothenate + ATP = (R)-4'-phosphopantothenate + ADP + H(+). Its pathway is cofactor biosynthesis; coenzyme A biosynthesis; CoA from (R)-pantothenate: step 1/5. In terms of biological role, catalyzes the phosphorylation of pantothenate (Pan), the first step in CoA biosynthesis. The protein is Type III pantothenate kinase of Ehrlichia canis (strain Jake).